Consider the following 299-residue polypeptide: Ribonuclease Z (299 aa).

Residues histidine 60, histidine 62, aspartate 64, histidine 65, histidine 137, aspartate 207, and histidine 265 each coordinate Zn(2+). Residue aspartate 64 is the Proton acceptor of the active site.

It belongs to the RNase Z family. In terms of assembly, homodimer. It depends on Zn(2+) as a cofactor.

It carries out the reaction Endonucleolytic cleavage of RNA, removing extra 3' nucleotides from tRNA precursor, generating 3' termini of tRNAs. A 3'-hydroxy group is left at the tRNA terminus and a 5'-phosphoryl group is left at the trailer molecule.. In terms of biological role, zinc phosphodiesterase, which displays some tRNA 3'-processing endonuclease activity. Probably involved in tRNA maturation, by removing a 3'-trailer from precursor tRNA. This Nitrosopumilus maritimus (strain SCM1) protein is Ribonuclease Z.